The chain runs to 342 residues: UDP-N-acetylglucosamine--N-acetylmuramyl-(pentapeptide) pyrophosphoryl-undecaprenol N-acetylglucosamine transferase (342 aa).

UDP-N-acetyl-alpha-D-glucosamine-binding positions include 10–12 (TGG), asparagine 124, serine 177, and glutamine 275.

The protein belongs to the glycosyltransferase 28 family. MurG subfamily.

The protein resides in the cell inner membrane. It carries out the reaction di-trans,octa-cis-undecaprenyl diphospho-N-acetyl-alpha-D-muramoyl-L-alanyl-D-glutamyl-meso-2,6-diaminopimeloyl-D-alanyl-D-alanine + UDP-N-acetyl-alpha-D-glucosamine = di-trans,octa-cis-undecaprenyl diphospho-[N-acetyl-alpha-D-glucosaminyl-(1-&gt;4)]-N-acetyl-alpha-D-muramoyl-L-alanyl-D-glutamyl-meso-2,6-diaminopimeloyl-D-alanyl-D-alanine + UDP + H(+). The protein operates within cell wall biogenesis; peptidoglycan biosynthesis. Its function is as follows. Cell wall formation. Catalyzes the transfer of a GlcNAc subunit on undecaprenyl-pyrophosphoryl-MurNAc-pentapeptide (lipid intermediate I) to form undecaprenyl-pyrophosphoryl-MurNAc-(pentapeptide)GlcNAc (lipid intermediate II). In Campylobacter jejuni subsp. doylei (strain ATCC BAA-1458 / RM4099 / 269.97), this protein is UDP-N-acetylglucosamine--N-acetylmuramyl-(pentapeptide) pyrophosphoryl-undecaprenol N-acetylglucosamine transferase.